We begin with the raw amino-acid sequence, 112 residues long: UPF0235 protein RHE_CH03912 (112 aa).

Belongs to the UPF0235 family.

This is UPF0235 protein RHE_CH03912 from Rhizobium etli (strain ATCC 51251 / DSM 11541 / JCM 21823 / NBRC 15573 / CFN 42).